Here is a 208-residue protein sequence, read N- to C-terminus: Protein-L-isoaspartate O-methyltransferase (208 aa).

Ser59 is an active-site residue.

The protein belongs to the methyltransferase superfamily. L-isoaspartyl/D-aspartyl protein methyltransferase family.

Its subcellular location is the cytoplasm. The enzyme catalyses [protein]-L-isoaspartate + S-adenosyl-L-methionine = [protein]-L-isoaspartate alpha-methyl ester + S-adenosyl-L-homocysteine. Functionally, catalyzes the methyl esterification of L-isoaspartyl residues in peptides and proteins that result from spontaneous decomposition of normal L-aspartyl and L-asparaginyl residues. It plays a role in the repair and/or degradation of damaged proteins. This is Protein-L-isoaspartate O-methyltransferase from Vibrio campbellii (strain ATCC BAA-1116).